Reading from the N-terminus, the 280-residue chain is Diaminopimelate epimerase (280 aa).

Substrate contacts are provided by Asn11 and Asn64. Cys73 functions as the Proton donor in the catalytic mechanism. Substrate is bound by residues Gly74–Asn75, Asn162, Asn195, and Glu213–Arg214. The active-site Proton acceptor is the Cys222. Substrate is bound at residue Gly223–Thr224.

The protein belongs to the diaminopimelate epimerase family. In terms of assembly, homodimer.

It localises to the cytoplasm. The enzyme catalyses (2S,6S)-2,6-diaminopimelate = meso-2,6-diaminopimelate. The protein operates within amino-acid biosynthesis; L-lysine biosynthesis via DAP pathway; DL-2,6-diaminopimelate from LL-2,6-diaminopimelate: step 1/1. Catalyzes the stereoinversion of LL-2,6-diaminopimelate (L,L-DAP) to meso-diaminopimelate (meso-DAP), a precursor of L-lysine and an essential component of the bacterial peptidoglycan. This is Diaminopimelate epimerase from Pelotomaculum thermopropionicum (strain DSM 13744 / JCM 10971 / SI).